The chain runs to 166 residues: Ribonuclease H (166 aa).

One can recognise an RNase H type-1 domain in the interval 5 to 147; the sequence is PRKRVALFTD…VDREARRQAQ (143 aa). Residues aspartate 14, glutamate 52, aspartate 74, and aspartate 139 each contribute to the Mg(2+) site. A disordered region spans residues 128–166; that stretch reads GHTGHPENERVDREARRQAQSQAKTPCPPRAPTLFHEEA. Over residues 131–144 the composition is skewed to basic and acidic residues; sequence GHPENERVDREARR.

Belongs to the RNase H family. As to quaternary structure, monomer. Mg(2+) serves as cofactor.

The catalysed reaction is Endonucleolytic cleavage to 5'-phosphomonoester.. Functionally, endonuclease that specifically degrades the RNA of RNA-DNA hybrids. The chain is Ribonuclease H (rnhA) from Thermus thermophilus (strain ATCC 27634 / DSM 579 / HB8).